The following is a 1420-amino-acid chain: ABC transporter G family member 32 (1420 aa).

The region spanning 135–408 (LRNIHVIGGK…FSSLGFTCPD (274 aa)) is the ABC transporter 1 domain. Residue 168–175 (GPPSSGKT) participates in ATP binding. In terms of domain architecture, ABC transmembrane type-2 1 spans 486–699 (ELLKINFAWQ…AQNAASVNEF (214 aa)). Helical transmembrane passes span 504–524 (FIYV…MTVF), 544–564 (LYFS…MLVA), 585–605 (LPSW…WVAV), 623–643 (FLLY…MGSL), 648–668 (IVAN…GGFI), 674–694 (IPSW…QNAA), and 735–755 (IGVA…TLFL). The region spanning 818 to 1070 (LSFSNINYYV…ELIKYFESIE (253 aa)) is the ABC transporter 2 domain. Position 863–870 (863–870 (GVSGAGKT)) interacts with ATP. One can recognise an ABC transmembrane type-2 2 domain in the interval 1143–1357 (SQFVACLWKQ…TLYGLLVSQY (215 aa)). 7 consecutive transmembrane segments (helical) span residues 1162–1182 (YTAV…TICW), 1202–1222 (YAAV…VVSI), 1235–1255 (MYSA…YVLA), 1277–1297 (FLWY…YGMM), 1307–1327 (VASI…GFMI), 1334–1354 (LWWR…GLLV), and 1392–1412 (VSAI…AFAI).

This sequence belongs to the ABC transporter superfamily. ABCG family. PDR (TC 3.A.1.205) subfamily. In terms of tissue distribution, ubiquitous in aerial organs. Higher expression levels in young, expanding tissues than in older tissues. Detected in the epidermal layer.

It is found in the cell membrane. Functionally, may be a general defense protein. Required for the formation of the cuticle layer of the cell wall. The chain is ABC transporter G family member 32 from Arabidopsis thaliana (Mouse-ear cress).